The primary structure comprises 452 residues: Probable 1,4-beta-D-glucan cellobiohydrolase A (452 aa).

Positions 1–17 (MHQRALLFSALLTAVRA) are cleaved as a signal peptide. A glycan (N-linked (GlcNAc...) asparagine) is linked at Asn62. The Nucleophile role is filled by Glu227. The active-site Proton donor is the Glu232. 4 N-linked (GlcNAc...) asparagine glycosylation sites follow: Asn285, Asn335, Asn402, and Asn445.

Belongs to the glycosyl hydrolase 7 (cellulase C) family.

Its subcellular location is the secreted. The enzyme catalyses Hydrolysis of (1-&gt;4)-beta-D-glucosidic linkages in cellulose and cellotetraose, releasing cellobiose from the non-reducing ends of the chains.. Functionally, the biological conversion of cellulose to glucose generally requires three types of hydrolytic enzymes: (1) Endoglucanases which cut internal beta-1,4-glucosidic bonds; (2) Exocellobiohydrolases that cut the disaccharide cellobiose from the non-reducing end of the cellulose polymer chain; (3) Beta-1,4-glucosidases which hydrolyze the cellobiose and other short cello-oligosaccharides to glucose. The sequence is that of Probable 1,4-beta-D-glucan cellobiohydrolase A (cbhA) from Aspergillus niger (strain ATCC MYA-4892 / CBS 513.88 / FGSC A1513).